The following is a 643-amino-acid chain: Fructose-1,6-bisphosphatase class 3 (643 aa).

This sequence belongs to the FBPase class 3 family. Requires Mn(2+) as cofactor.

The catalysed reaction is beta-D-fructose 1,6-bisphosphate + H2O = beta-D-fructose 6-phosphate + phosphate. The protein operates within carbohydrate biosynthesis; gluconeogenesis. The sequence is that of Fructose-1,6-bisphosphatase class 3 from Streptococcus agalactiae serotype Ia (strain ATCC 27591 / A909 / CDC SS700).